Reading from the N-terminus, the 150-residue chain is Pyruvoyl-dependent arginine decarboxylase (150 aa).

A Pyruvic acid (Ser) modification is found at Ser42.

This sequence belongs to the PdaD family. Pyruvate is required as a cofactor.

It catalyses the reaction L-arginine + H(+) = agmatine + CO2. This Methanopyrus kandleri (strain AV19 / DSM 6324 / JCM 9639 / NBRC 100938) protein is Pyruvoyl-dependent arginine decarboxylase.